A 934-amino-acid chain; its full sequence is Palmitoyltransferase ZDHHC8 (934 aa).

Over 1–9 (MPKCDVKTR) the chain is Cytoplasmic. The helical transmembrane segment at 10–30 (YIPATFAWIVLLLTTFLFFFY) threads the bilayer. At 31–47 (PCQFYVKSHPWVLAYQG) the chain is on the extracellular side. Residues 48–68 (VITFFVLANFTLATFMDPGII) form a helical membrane-spanning segment. Over 69–142 (PKASPDEDCE…NNCIGRRNYR (74 aa)) the chain is Cytoplasmic. Residues 99–149 (KWCVTCKFYRPPRCSHCSVCNHCIETFDHHCPWVNNCIGRRNYRFFFFFLV) enclose the DHHC domain. Cysteine 129 serves as the catalytic S-palmitoyl cysteine intermediate. Residues 143 to 163 (FFFFFLVSLSIHMLSIFSLCL) form a helical membrane-spanning segment. The Extracellular segment spans residues 164–177 (VYVLKIMPNIKDTA). Residues 178–198 (PIVAIILMGLVTILAIPIFGL) form a helical membrane-spanning segment. Topologically, residues 199 to 934 (TGFHMVLVSR…IYDMNYEISV (736 aa)) are cytoplasmic. Disordered regions lie at residues 336–440 (NGYN…GYTS), 506–525 (MASPVRRSNPGTPTQPRRPD), 669–705 (QRGVYMWKDTSPGFTNNAGQQQQQQQQAQQVVSSGIG), 751–780 (QQQQQQQQAAAAAAASYHRSNPTSPTTMPQ), 835–862 (PNPMGNQGGGNLQTQPSPQIKRKQTPTR), and 881–934 (LEQQ…EISV). Composition is skewed to polar residues over residues 337 to 349 (GYNQRSGSTTLYS) and 381 to 394 (RHNSSSFYLPQVSD). The segment covering 397–411 (GLNGSVSTGGGGGGD) has biased composition (gly residues). The segment covering 415-429 (HMRLYHPRHSPHARP) has biased composition (basic residues). 2 stretches are compositionally biased toward low complexity: residues 688–705 (QQQQQQQQAQQVVSSGIG) and 751–765 (QQQQQQQQAAAAAAA). The segment covering 768-780 (HRSNPTSPTTMPQ) has biased composition (polar residues). Residues 910–919 (MQSNASNSGT) show a composition bias toward polar residues.

It belongs to the DHHC palmitoyltransferase family. ERF2/ZDHHC9 subfamily.

The protein resides in the golgi apparatus membrane. Its subcellular location is the cell membrane. The enzyme catalyses L-cysteinyl-[protein] + hexadecanoyl-CoA = S-hexadecanoyl-L-cysteinyl-[protein] + CoA. Functionally, palmitoyltransferase that catalyzes the addition of palmitate onto various protein substrates and therefore functions in several unrelated biological processes. Regulates tissue growth possibly by regulating Ras64B protein stability. May regulate CG34450 mRNA levels. The protein is Palmitoyltransferase ZDHHC8 of Drosophila melanogaster (Fruit fly).